The following is a 416-amino-acid chain: ABSCISIC ACID-INSENSITIVE 5-like protein 5 (416 aa).

The disordered stretch occupies residues 1–23; sequence MDGSMNLGNEPPGDGGGGGGLTR. Positions 13-22 are enriched in gly residues; sequence GDGGGGGGLT. Ser26, Ser45, and Ser86 each carry phosphoserine. Thr135 carries the post-translational modification Phosphothreonine. A disordered region spans residues 300 to 326; it reads SEGIGKSNGDSSSLSPSPYMFNGGVRG. A bZIP domain is found at 336–399; it reads VERRQRRMIK…KNQETEMRNL (64 aa). Residues 338-357 are basic motif; it reads RRQRRMIKNRESAARSRARK. Residues 364–385 form a leucine-zipper region; sequence LEAEVAKLKEENDELQRKQARI. The tract at residues 388–416 is disordered; that stretch reads MQKNQETEMRNLLQGGPKKKLRRTESGPW.

The protein belongs to the bZIP family. ABI5 subfamily. As to quaternary structure, DNA-binding heterodimer. Interacts with ARIA. In terms of processing, the activation by phosphorylation is induced by abscisic acid (ABA). Phosphorylated by SRK2C, SRK2D, SRK2E, SRK2F and SRK2I in vitro. In terms of tissue distribution, expressed in roots, leaves, flowers and siliques but not in seeds.

Its subcellular location is the nucleus. In terms of biological role, involved in ABA and stress responses and acts as a positive component of glucose signal transduction. Functions as a transcriptional activator in the ABA-inducible expression of rd29B. Binds specifically to the ABA-responsive element (ABRE) of the rd29B gene promoter. The chain is ABSCISIC ACID-INSENSITIVE 5-like protein 5 (ABF2) from Arabidopsis thaliana (Mouse-ear cress).